The primary structure comprises 188 residues: Photosystem I assembly protein Ycf4 (188 aa).

The next 2 membrane-spanning stretches (helical) occupy residues 28 to 48 (WATVITIGGTGFFLAGLSSYL) and 68 to 88 (IAIGFYGVAALLLAIYLWATI).

It belongs to the Ycf4 family.

The protein resides in the cellular thylakoid membrane. Its function is as follows. Seems to be required for the assembly of the photosystem I complex. This Cyanothece sp. (strain PCC 7425 / ATCC 29141) protein is Photosystem I assembly protein Ycf4.